Consider the following 586-residue polypeptide: Septin-9 (586 aa).

N-acetylmethionine is present on Met-1. Residues 1–14 (MKKSYSGGTRTSSG) show a composition bias toward low complexity. 3 disordered regions span residues 1–49 (MKKS…RVQT), 62–108 (KFQD…SRRT), and 134–268 (RAEV…PASR). 2 positions are modified to phosphoserine: Ser-22 and Ser-30. Phosphothreonine is present on residues Thr-38, Thr-42, and Thr-49. Lys-62 carries the post-translational modification N6-acetyllysine. Ser-82, Ser-85, Ser-89, and Ser-96 each carry phosphoserine. Residues 134-151 (RAEVLGHKTPEPAPRRTE) are compositionally biased toward basic and acidic residues. A Phosphothreonine modification is found at Thr-142. Tyr-278 carries the post-translational modification Phosphotyrosine. One can recognise a Septin-type G domain in the interval 295-567 (QGFEFNIMVV…EAYRVKRLNE (273 aa)). Residues 305–312 (GQSGLGKS) form a G1 motif region. 305–312 (GQSGLGKS) contributes to the GTP binding site. Phosphoserine occurs at positions 327 and 332. GTP-binding positions include Thr-339, Gly-365, 445-453 (KADTLTLEE), Gly-501, and Arg-516. Positions 362–365 (DTPG) are G3 motif. The segment at 444-447 (AKAD) is G4 motif.

This sequence belongs to the TRAFAC class TrmE-Era-EngA-EngB-Septin-like GTPase superfamily. Septin GTPase family. Septins polymerize into heterooligomeric protein complexes that form filaments, and associate with cellular membranes, actin filaments, and microtubules. GTPase activity is required for filament formation. Interacts with SEPTIN2, SEPTIN6, SEPTIN7, SEPTIN11 and SEPTIN14. Interacts with RTKN and ARHGEF18. In a mesenchymal cell line, Rho/RTKN signals cause disruption of wild-type septin filaments, but not of those containing isoform 2 variants HNA Trp-106 and Phe-111. In a mesenchymal cell line, isoform 2 variants HNA Trp-106 and Phe-111, but not wild type, form filaments with SEPTIN4. Widely expressed. Isoforms are differentially expressed in testes, kidney, liver heart, spleen, brain, peripheral blood leukocytes, skeletal muscle and kidney. Specific isoforms appear to demonstrate tissue specificity. Isoform 5 is the most highly expressed in fetal tissue. Isoform 1 is detected in all tissues except the brain and thymus, while isoform 2, isoform 3, and isoform 4 are detected at low levels in approximately half of the fetal tissues.

Its subcellular location is the cytoplasm. The protein localises to the cytoskeleton. Functionally, filament-forming cytoskeletal GTPase. May play a role in cytokinesis (Potential). May play a role in the internalization of 2 intracellular microbial pathogens, Listeria monocytogenes and Shigella flexneri. This is Septin-9 from Homo sapiens (Human).